Consider the following 323-residue polypeptide: DNA repair and recombination protein RadA (323 aa).

An ATP-binding site is contributed by 115-122 (GEFGSGKT).

Belongs to the eukaryotic RecA-like protein family.

Functionally, involved in DNA repair and in homologous recombination. Binds and assemble on single-stranded DNA to form a nucleoprotein filament. Hydrolyzes ATP in a ssDNA-dependent manner and promotes DNA strand exchange between homologous DNA molecules. The sequence is that of DNA repair and recombination protein RadA from Thermoplasma volcanium (strain ATCC 51530 / DSM 4299 / JCM 9571 / NBRC 15438 / GSS1).